The sequence spans 138 residues: Nanos homolog 2 (138 aa).

Residues Glu31–Ala55 form a disordered region. The segment at Leu62–Leu116 adopts a Nanos-type zinc-finger fold. Zn(2+) is bound by residues Cys63, Cys66, His79, Cys90, Cys98, Cys101, His109, and Cys114. Short sequence motifs (C2HC) lie at residues Cys63–Cys90 and Cys98–Cys114.

Belongs to the nanos family. In terms of assembly, interacts with CNOT1, CNOT3, CNOT6L, CNOT7 and CNOT9. In terms of tissue distribution, testis and ovary. Expression found in several spermatogenic stages: in cells on the periphery of the tubules which could correspond to spermatogonia, in spermatocytes and in round spermatids (at protein level).

The protein resides in the cytoplasm. It localises to the P-body. It is found in the perinuclear region. Its function is as follows. Plays a key role in the sexual differentiation of germ cells by promoting the male fate but suppressing the female fate. Represses the female fate pathways by suppressing meiosis, which in turn results in the promotion of the male fate. Maintains the suppression of meiosis by preventing STRA8 expression, which is required for premeiotic DNA replication, after CYP26B1 is decreased. Regulates the localization of the CCR4-NOT deadenylation complex to P-bodies and plays a role in recruiting the complex to trigger the degradation of mRNAs involved in meiosis. Required for the maintenance of the spermatogonial stem cell population. Not essential for the assembly of P-bodies but is required for the maintenance of their normal state. The protein is Nanos homolog 2 (NANOS2) of Homo sapiens (Human).